A 92-amino-acid polypeptide reads, in one-letter code: MDKEAKYVYIPDQEGNDVKFEVIIYFEIEKLKGQYIIATPAFEETDEAYAFKIFKDEDGSDIFIALEDDDEEFEMVLETYETLMNEDGLIEE.

It belongs to the UPF0473 family.

The polypeptide is UPF0473 protein Cbei_1107 (Clostridium beijerinckii (strain ATCC 51743 / NCIMB 8052) (Clostridium acetobutylicum)).